A 480-amino-acid polypeptide reads, in one-letter code: Probable WRKY transcription factor 61 (480 aa).

The interval 30–108 (NQLMAKHNEP…RNYDDNEKSS (79 aa)) is disordered. Composition is skewed to basic and acidic residues over residues 57–66 (REKVNEREEL) and 84–106 (NKEE…DNEK). Residues 185-251 (CETPTMNDGC…YEGTHNHPLP (67 aa)) constitute a DNA-binding region (WRKY).

The protein resides in the nucleus. In terms of biological role, transcription factor. Interacts specifically with the W box (5'-(T)TGAC[CT]-3'), a frequently occurring elicitor-responsive cis-acting element. The protein is Probable WRKY transcription factor 61 (WRKY61) of Arabidopsis thaliana (Mouse-ear cress).